Reading from the N-terminus, the 54-residue chain is Rubredoxin (54 aa).

The region spanning 2-52 is the Rubredoxin-like domain; it reads AKWVCKICGYIYDEDAGDPDNGISPGTKFEELPDDWVCPICGAPKSEFEKL. Residues Cys6, Cys9, Cys39, and Cys42 each coordinate Fe cation.

It belongs to the rubredoxin family. Fe(3+) is required as a cofactor.

In terms of biological role, rubredoxin is a small nonheme, iron protein lacking acid-labile sulfide. Its single Fe, chelated to 4 Cys, functions as an electron acceptor and may also stabilize the conformation of the molecule. This chain is Rubredoxin (rub), found in Pyrococcus furiosus (strain ATCC 43587 / DSM 3638 / JCM 8422 / Vc1).